Here is a 1649-residue protein sequence, read N- to C-terminus: DNA-directed RNA polymerase subunit beta' (1649 aa).

Zn(2+)-binding residues include Cys63, Cys65, Cys78, and Cys81. Positions 747, 749, and 751 each coordinate Mg(2+). Cys1078, Cys1269, Cys1276, and Cys1279 together coordinate Zn(2+).

The protein belongs to the RNA polymerase beta' chain family. In terms of assembly, the RNAP catalytic core consists of 2 alpha, 1 beta, 1 beta' and 1 omega subunit. When a sigma factor is associated with the core the holoenzyme is formed, which can initiate transcription. Requires Mg(2+) as cofactor. The cofactor is Zn(2+).

It catalyses the reaction RNA(n) + a ribonucleoside 5'-triphosphate = RNA(n+1) + diphosphate. Its function is as follows. DNA-dependent RNA polymerase catalyzes the transcription of DNA into RNA using the four ribonucleoside triphosphates as substrates. This Thermosipho melanesiensis (strain DSM 12029 / CIP 104789 / BI429) protein is DNA-directed RNA polymerase subunit beta'.